Reading from the N-terminus, the 342-residue chain is Fatty acid desaturase 6 (342 aa).

2 helical membrane-spanning segments follow: residues 39 to 59 (GVDC…FLCL) and 63 to 83 (NILA…TLTV). Positions 87–91 (HLATH) match the Histidine box-1 motif. A helical membrane pass occupies residues 100-120 (WSKILMIFFLEVCTAFSAEFA). Residues 124–128 (HVNLH) carry the Histidine box-2 motif. 2 helical membrane-spanning segments follow: residues 151–171 (YVYM…VALE) and 185–205 (LGFI…VSGF). The Histidine box-3 signature appears at 277–281 (HVEHH).

The protein belongs to the fatty acid desaturase type 1 family.

The protein localises to the membrane. It functions in the pathway lipid metabolism; fatty acid metabolism. The sequence is that of Fatty acid desaturase 6 (Fads6) from Mus musculus (Mouse).